The primary structure comprises 509 residues: Dihydrolipoyl dehydrogenase, mitochondrial (509 aa).

The N-terminal 35 residues, 1–35 (MQSWSRVYCSLAKRGHFNRISHGLQGLSAVPLRTY), are a transit peptide targeting the mitochondrion. An N6-acetyllysine; alternate modification is found at Lys-66. N6-succinyllysine; alternate is present on Lys-66. FAD contacts are provided by residues 71–80 (EKNETLGGTC) and Lys-89. Cys-80 and Cys-85 are joined by a disulfide. An N6-acetyllysine; alternate mark is found at Lys-104, Lys-122, Lys-132, and Lys-143. Lys-104, Lys-122, Lys-132, and Lys-143 each carry N6-succinyllysine; alternate. Gly-154 provides a ligand contact to FAD. 2 positions are modified to N6-succinyllysine: Lys-159 and Lys-166. Residue 183–185 (TGS) coordinates FAD. Residues 220–227 (GAGVIGVE) and Glu-243 contribute to the NAD(+) site. An N6-succinyllysine mark is found at Lys-273 and Lys-277. An NAD(+)-binding site is contributed by Val-278. Ser-285 and Ser-297 each carry phosphoserine. Gly-314 contributes to the NAD(+) binding site. Lys-346 is subject to N6-acetyllysine. FAD-binding positions include Asp-355 and 361 to 364 (MLAH). Lys-410 bears the N6-acetyllysine; alternate mark. Lys-410 carries the N6-succinyllysine; alternate modification. Residues Lys-417 and Lys-420 each carry the N6-acetyllysine modification. Lys-430 carries the N6-succinyllysine modification. The Proton acceptor role is filled by His-487. The residue at position 502 (Ser-502) is a Phosphoserine. Position 505 is an N6-acetyllysine; alternate (Lys-505). Lys-505 is subject to N6-succinyllysine; alternate.

Belongs to the class-I pyridine nucleotide-disulfide oxidoreductase family. Homodimer. Part of the multimeric pyruvate dehydrogenase complex that contains multiple copies of pyruvate dehydrogenase (subunits PDHA (PDHA1 or PDHA2) and PDHB, E1), dihydrolipoamide acetyltransferase (DLAT, E2) and lipoamide dehydrogenase (DLD, E3). These subunits are bound to an inner core composed of about 48 DLAT and 12 PDHX molecules (by non covalent bonds). The 2-oxoglutarate dehydrogenase complex is composed of OGDH (2-oxoglutarate dehydrogenase; E1), DLST (dihydrolipoamide succinyltransferase; E2), DLD (dihydrolipoamide dehydrogenase; E3) and the assembly factor KGD4. It contains multiple copies of the three enzymatic components (E1, E2 and E3). In the nucleus, the 2-oxoglutarate dehydrogenase complex associates with KAT2A. Interacts with PDHX. Requires FAD as cofactor. In terms of processing, tyrosine phosphorylated.

It is found in the mitochondrion matrix. The protein resides in the nucleus. It localises to the cell projection. The protein localises to the cilium. Its subcellular location is the flagellum. It is found in the cytoplasmic vesicle. The protein resides in the secretory vesicle. It localises to the acrosome. It carries out the reaction N(6)-[(R)-dihydrolipoyl]-L-lysyl-[protein] + NAD(+) = N(6)-[(R)-lipoyl]-L-lysyl-[protein] + NADH + H(+). Its function is as follows. Lipoamide dehydrogenase is a component of the glycine cleavage system as well as an E3 component of three alpha-ketoacid dehydrogenase complexes (pyruvate-, alpha-ketoglutarate-, and branched-chain amino acid-dehydrogenase complex). The 2-oxoglutarate dehydrogenase complex is mainly active in the mitochondrion. A fraction of the 2-oxoglutarate dehydrogenase complex also localizes in the nucleus and is required for lysine succinylation of histones: associates with KAT2A on chromatin and provides succinyl-CoA to histone succinyltransferase KAT2A. In monomeric form may have additional moonlighting function as serine protease. Involved in the hyperactivation of spermatazoa during capacitation and in the spermatazoal acrosome reaction. In Pongo abelii (Sumatran orangutan), this protein is Dihydrolipoyl dehydrogenase, mitochondrial (DLD).